A 171-amino-acid polypeptide reads, in one-letter code: CDP-archaeol synthase (171 aa).

The next 5 helical transmembrane spans lie at 7-27 (IFWA…PVLV), 54-74 (GFIG…FITP), 84-104 (VKLA…GSFI), 115-135 (PAIG…AYPV), and 141-161 (GQII…NYFA).

The protein belongs to the CDP-archaeol synthase family. Mg(2+) is required as a cofactor.

It is found in the cell membrane. It catalyses the reaction 2,3-bis-O-(geranylgeranyl)-sn-glycerol 1-phosphate + CTP + H(+) = CDP-2,3-bis-O-(geranylgeranyl)-sn-glycerol + diphosphate. The protein operates within membrane lipid metabolism; glycerophospholipid metabolism. Catalyzes the formation of CDP-2,3-bis-(O-geranylgeranyl)-sn-glycerol (CDP-archaeol) from 2,3-bis-(O-geranylgeranyl)-sn-glycerol 1-phosphate (DGGGP) and CTP. This reaction is the third ether-bond-formation step in the biosynthesis of archaeal membrane lipids. The protein is CDP-archaeol synthase of Thermococcus kodakarensis (strain ATCC BAA-918 / JCM 12380 / KOD1) (Pyrococcus kodakaraensis (strain KOD1)).